Consider the following 416-residue polypeptide: Formyl-CoA:oxalate CoA-transferase (416 aa).

Residues 17–18 (QS), Arg-38, 72–75 (LNTK), 96–98 (NFH), His-104, and 137–140 (KAYE) each bind CoA. Catalysis depends on Asp-169, which acts as the Nucleophile. Position 248–250 (248–250 (GGQ)) interacts with substrate. 273–275 (QEQ) serves as a coordination point for CoA.

The protein belongs to the CoA-transferase III family. Frc subfamily. In terms of assembly, homodimer.

The catalysed reaction is formyl-CoA + oxalate = oxalyl-CoA + formate. It functions in the pathway metabolic intermediate degradation; oxalate degradation; CO(2) and formate from oxalate: step 1/2. Functionally, involved in the catabolism of oxalate and in the adapatation to low pH via the induction of the oxalate-dependent acid tolerance response (ATR). Catalyzes the transfer of the CoA moiety from formyl-CoA to oxalate. The polypeptide is Formyl-CoA:oxalate CoA-transferase (Escherichia coli O81 (strain ED1a)).